We begin with the raw amino-acid sequence, 243 residues long: Hydroxyacylglutathione hydrolase (243 aa).

Residues H59, H61, D63, H64, H117, D135, and H173 each coordinate Zn(2+).

It belongs to the metallo-beta-lactamase superfamily. Glyoxalase II family. In terms of assembly, monomer. It depends on Zn(2+) as a cofactor.

The enzyme catalyses an S-(2-hydroxyacyl)glutathione + H2O = a 2-hydroxy carboxylate + glutathione + H(+). It participates in secondary metabolite metabolism; methylglyoxal degradation; (R)-lactate from methylglyoxal: step 2/2. In terms of biological role, thiolesterase that catalyzes the hydrolysis of S-D-lactoyl-glutathione to form glutathione and D-lactic acid. The protein is Hydroxyacylglutathione hydrolase of Acidiphilium cryptum (strain JF-5).